Consider the following 65-residue polypeptide: Disintegrin CC8A (65 aa).

One can recognise a Disintegrin domain in the interval 1-65; it reads MNSAHPCCDP…SDCPRNRIKK (65 aa). Cystine bridges form between Cys-7–Cys-30, Cys-21–Cys-27, Cys-26–Cys-51, and Cys-39–Cys-58. The short motif at 43-45 is the Cell attachment site element; the sequence is RGD.

The protein belongs to the disintegrin family. Dimeric disintegrin subfamily. In terms of assembly, heterodimer with CC8B; disulfide-linked. Expressed by the venom gland.

The protein resides in the secreted. Inhibits integrins alpha-IIb/beta-3 (ITGA2B/ITGB3), alpha-V/beta-3 (ITGAV/ITGB3), and alpha-5/beta-1 (ITGA5/ITGB1). This Cerastes cerastes (Horned desert viper) protein is Disintegrin CC8A.